The sequence spans 273 residues: MFKCKNFNYAVFGNPINHSKSPEIHSLFSKQTGISHFYKSCNVPLNSLYAVLQDFFKKDGRGANITAPFKQEAYFFCNKLTKRAEVAQSVNTLKKIDNCNILGDNTDGIGLLSDLIRLNFIKKNYSILIIGAGGAARGVLFPLLSYGCSICIFNRTVLNAEKLVLQFHKYGNINVFNTNSLHVKSFDLIINATSHFIQDKDNFIPFSCVSSKTCFYDMNYQTDNTFFFDWSRKTGSNFFSNGIGMLVFQAAHSFFLWHNVLPEIDYIIDLLNK.

Shikimate-binding positions include 19-21 (SKS) and T66. K70 acts as the Proton acceptor in catalysis. Shikimate-binding residues include N91 and D107. NADP(+)-binding positions include 131–135 (GAGGA) and M218. Y220 is a shikimate binding site. An NADP(+)-binding site is contributed by G242.

The protein belongs to the shikimate dehydrogenase family. As to quaternary structure, homodimer.

It carries out the reaction shikimate + NADP(+) = 3-dehydroshikimate + NADPH + H(+). It functions in the pathway metabolic intermediate biosynthesis; chorismate biosynthesis; chorismate from D-erythrose 4-phosphate and phosphoenolpyruvate: step 4/7. Functionally, involved in the biosynthesis of the chorismate, which leads to the biosynthesis of aromatic amino acids. Catalyzes the reversible NADPH linked reduction of 3-dehydroshikimate (DHSA) to yield shikimate (SA). This is Shikimate dehydrogenase (NADP(+)) from Buchnera aphidicola subsp. Acyrthosiphon pisum (strain 5A).